We begin with the raw amino-acid sequence, 318 residues long: Cyclic AMP receptor-like protein F (318 aa).

Over 1 to 3 the chain is Extracellular; that stretch reads MKD. A helical membrane pass occupies residues 4–24; it reads IILIYMICAPISMIGSLFIII. Over 25–38 the chain is Cytoplasmic; it reads TWLLYAKLKNSGSN. Residues 39–59 traverse the membrane as a helical segment; it reads FIFFQAISDFFFTSKYIITII. The Extracellular segment spans residues 60–83; it reads FYYINIPQFSDETSSTDTNPYCFS. Cysteine 81 and cysteine 177 are oxidised to a cystine. A helical transmembrane segment spans residues 84–104; that stretch reads LGLFSQFFGQATIMWSYTMTV. Residues 105-145 are Cytoplasmic-facing; sequence KVFHSYFEMKKKNNNNNIGSNNIGGGGGGNNSNKQNSIDKT. The helical transmembrane segment at 146-166 threads the bilayer; it reads LKWYHLFVWGFCLVNATIIGI. Over 167 to 187 the chain is Extracellular; that stretch reads SKQYGPSSTGCWIVGANNPYR. The helical transmembrane segment at 188 to 208 threads the bilayer; the sequence is FFELVPLYFTITTSIIILILI. Residues 209-234 are Cytoplasmic-facing; the sequence is LVKMKKSKPSSLLPTESMRYNQQARE. Residues 235–255 form a helical membrane-spanning segment; sequence FKIQLMKFVLIFIIFWLPATV. Topologically, residues 256-267 are extracellular; that stretch reads LRTLEYFGIEKT. The helical transmembrane segment at 268 to 288 threads the bilayer; sequence FFILLDAVSVSLQALANSLVW. At 289-318 the chain is on the cytoplasmic side; that stretch reads ATSPQFLKLMKRKVVNKPNKQMEREYLINK.

It belongs to the G-protein coupled receptor 5 family.

Its subcellular location is the membrane. Receptor for cAMP. The chain is Cyclic AMP receptor-like protein F (crlF) from Dictyostelium discoideum (Social amoeba).